The sequence spans 184 residues: Large ribosomal subunit protein uL6 (184 aa).

The protein belongs to the universal ribosomal protein uL6 family. In terms of assembly, part of the 50S ribosomal subunit.

Functionally, this protein binds to the 23S rRNA, and is important in its secondary structure. It is located near the subunit interface in the base of the L7/L12 stalk, and near the tRNA binding site of the peptidyltransferase center. This Thermococcus onnurineus (strain NA1) protein is Large ribosomal subunit protein uL6.